The following is a 444-amino-acid chain: ATP-dependent protease ATPase subunit HslU (444 aa).

ATP-binding positions include Ile18 and 60 to 65 (GVGKTE). The disordered stretch occupies residues 141-161 (DAWGNNEEGDNDSGTRQSFRK). Positions 257, 322, and 394 each coordinate ATP.

This sequence belongs to the ClpX chaperone family. HslU subfamily. A double ring-shaped homohexamer of HslV is capped on each side by a ring-shaped HslU homohexamer. The assembly of the HslU/HslV complex is dependent on binding of ATP.

It localises to the cytoplasm. ATPase subunit of a proteasome-like degradation complex; this subunit has chaperone activity. The binding of ATP and its subsequent hydrolysis by HslU are essential for unfolding of protein substrates subsequently hydrolyzed by HslV. HslU recognizes the N-terminal part of its protein substrates and unfolds these before they are guided to HslV for hydrolysis. The protein is ATP-dependent protease ATPase subunit HslU of Aliivibrio fischeri (strain MJ11) (Vibrio fischeri).